The primary structure comprises 182 residues: Ribosome maturation factor RimM (182 aa).

Positions 103–182 (EGDYYWKDLM…TIEVDWDPGF (80 aa)) constitute a PRC barrel domain.

The protein belongs to the RimM family. In terms of assembly, binds ribosomal protein uS19.

The protein localises to the cytoplasm. An accessory protein needed during the final step in the assembly of 30S ribosomal subunit, possibly for assembly of the head region. Essential for efficient processing of 16S rRNA. May be needed both before and after RbfA during the maturation of 16S rRNA. It has affinity for free ribosomal 30S subunits but not for 70S ribosomes. This Klebsiella pneumoniae subsp. pneumoniae (strain ATCC 700721 / MGH 78578) protein is Ribosome maturation factor RimM.